Here is a 218-residue protein sequence, read N- to C-terminus: Protein GrpE (218 aa).

Residues 1–75 are disordered; it reads MTTPNGMPDN…DVDPDLDGDG (75 aa). The span at 23–40 shows a compositional bias: basic and acidic residues; that stretch reads SADRAEQAAEEAAARQAE. A compositionally biased stretch (acidic residues) spans 48–75; sequence SEEEISPELEAEINDLLSDVDPDLDGDG.

It belongs to the GrpE family. Homodimer.

It is found in the cytoplasm. Participates actively in the response to hyperosmotic and heat shock by preventing the aggregation of stress-denatured proteins, in association with DnaK and GrpE. It is the nucleotide exchange factor for DnaK and may function as a thermosensor. Unfolded proteins bind initially to DnaJ; upon interaction with the DnaJ-bound protein, DnaK hydrolyzes its bound ATP, resulting in the formation of a stable complex. GrpE releases ADP from DnaK; ATP binding to DnaK triggers the release of the substrate protein, thus completing the reaction cycle. Several rounds of ATP-dependent interactions between DnaJ, DnaK and GrpE are required for fully efficient folding. The sequence is that of Protein GrpE from Corynebacterium glutamicum (strain ATCC 13032 / DSM 20300 / JCM 1318 / BCRC 11384 / CCUG 27702 / LMG 3730 / NBRC 12168 / NCIMB 10025 / NRRL B-2784 / 534).